Reading from the N-terminus, the 267-residue chain is GTP cyclohydrolase FolE2 (267 aa).

Belongs to the GTP cyclohydrolase IV family.

It catalyses the reaction GTP + H2O = 7,8-dihydroneopterin 3'-triphosphate + formate + H(+). Its pathway is cofactor biosynthesis; 7,8-dihydroneopterin triphosphate biosynthesis; 7,8-dihydroneopterin triphosphate from GTP: step 1/1. Functionally, converts GTP to 7,8-dihydroneopterin triphosphate. This Nitrosomonas eutropha (strain DSM 101675 / C91 / Nm57) protein is GTP cyclohydrolase FolE2.